The chain runs to 183 residues: Mast cell-expressed membrane protein 1 (183 aa).

Positions 1–26 are disordered; that stretch reads MHASASQDKNRRKPGHDEGAHNPDYE. Residues 1–70 lie on the Cytoplasmic side of the membrane; it reads MHASASQDKN…PPWLYRTIMM (70 aa). Positions 15-24 are enriched in basic and acidic residues; the sequence is GHDEGAHNPD. A helical; Signal-anchor for type II membrane protein membrane pass occupies residues 71–91; the sequence is LYVLLALVFLSCIVLSALVLV. The Extracellular portion of the chain corresponds to 92 to 183; the sequence is KNSEMSKELW…EKKAQPQPST (92 aa). Asparagine 109 carries an N-linked (GlcNAc...) asparagine glycan.

Its subcellular location is the membrane. The chain is Mast cell-expressed membrane protein 1 from Mus musculus (Mouse).